A 331-amino-acid polypeptide reads, in one-letter code: MMTMNGKQHFSMHPALHPSSEGMRRVCLPAPQLQGNIFSGFDESLLARAEALAAADIVSHGKSHPFKTDVTYHTMSSVPCTSSSSTVPISHPSSNLPSHHHHHLSHQTLEGDLLDHISSSLSVSGMGAPPDPSVMTTQAHQHHLQMGHLHQAMAMGHPHTLSVHNGMACVNDVESDPRELEAFAERFKQRRIKLGVTQADVGSALANLKIPGVGSLSQSTICRFESLTLSHNNMIALKPVLQAWLEEAEAAYREKNGKPDLFNGNERKRKRTSIAAPEKRSLEAYFAIQPRPSSEKIAAIAEKLDLKKNVVRVWFCNQRQKQKRMKYSAVH.

Residues 81 to 97 (TSSSSTVPISHPSSNLP) are compositionally biased toward low complexity. Residues 81–108 (TSSSSTVPISHPSSNLPSHHHHHLSHQT) are disordered. One can recognise a POU-specific domain in the interval 172-249 (DVESDPRELE…VLQAWLEEAE (78 aa)). Positions 267-326 (RKRKRTSIAAPEKRSLEAYFAIQPRPSSEKIAAIAEKLDLKKNVVRVWFCNQRQKQKRMK) form a DNA-binding region, homeobox.

This sequence belongs to the POU transcription factor family. Class-4 subfamily. As to quaternary structure, interaction with ISL1. Expressed in the nervous system. Expressed in the otic vesicle during embryogenesis. Expressed in the adult retina in a subset of retinal ganglion cells (RGCs), and at a lower level in the adult tectum. Not expressed in the adult olfactory bulb.

It localises to the nucleus. The protein localises to the cytoplasm. Functionally, acts as a transcriptional activator. Acts by binding to sequences related to the consensus octamer motif 5'-ATGCAAAT-3' in the regulatory regions of its target genes. May play a role in specifying terminally differentiated neuronal phenotypes. The protein is POU domain, class 4, transcription factor 3 (pou4f3) of Danio rerio (Zebrafish).